A 1086-amino-acid polypeptide reads, in one-letter code: Transcription initiation factor TFIID subunit 2 (1086 aa).

Residues 1–11 show a composition bias toward polar residues; sequence MDFSEASTSGD. Disordered regions lie at residues 1–53 and 1064–1086; these read MDFS…PPPV and GYEAARRSPPRRDFGDETMNLMQ. Composition is skewed to pro residues over residues 19 to 36 and 44 to 53; these read PFPPKPREGAPPPAPPLA and APPPLQPPPV. Basic and acidic residues predominate over residues 1067-1078; it reads AARRSPPRRDFG.

This sequence belongs to the TAF2 family. As to quaternary structure, component of the TFIID basal transcription factor complex, composed of TATA-box-binding protein tbp-1, and a number of TBP-associated factors (TAFs).

It is found in the nucleus. The TFIID basal transcription factor complex plays a major role in the initiation of RNA polymerase II (Pol II)-dependent transcription. TFIID recognizes and binds promoters via its subunit tbp-1, a TATA-box-binding protein, and promotes assembly of the pre-initiation complex (PIC). The TFIID complex consists of tbp-1 and TBP-associated factors (TAFs), including taf-2. May regulate RNA polymerase II activity and thereby may control transcription initiation by RNA polymerase II. The chain is Transcription initiation factor TFIID subunit 2 from Caenorhabditis elegans.